The chain runs to 279 residues: Putative pyruvate, phosphate dikinase regulatory protein (279 aa).

154-161 (GVSRTSKT) provides a ligand contact to ADP.

This sequence belongs to the pyruvate, phosphate/water dikinase regulatory protein family. PDRP subfamily.

It carries out the reaction N(tele)-phospho-L-histidyl/L-threonyl-[pyruvate, phosphate dikinase] + ADP = N(tele)-phospho-L-histidyl/O-phospho-L-threonyl-[pyruvate, phosphate dikinase] + AMP + H(+). The enzyme catalyses N(tele)-phospho-L-histidyl/O-phospho-L-threonyl-[pyruvate, phosphate dikinase] + phosphate + H(+) = N(tele)-phospho-L-histidyl/L-threonyl-[pyruvate, phosphate dikinase] + diphosphate. Functionally, bifunctional serine/threonine kinase and phosphorylase involved in the regulation of the pyruvate, phosphate dikinase (PPDK) by catalyzing its phosphorylation/dephosphorylation. The sequence is that of Putative pyruvate, phosphate dikinase regulatory protein from Rhodopseudomonas palustris (strain BisB18).